A 120-amino-acid chain; its full sequence is Glycine cleavage system H protein (120 aa).

The 83-residue stretch at 17–99 (IATVGITSHA…QGAGWFFKLK (83 aa)) folds into the Lipoyl-binding domain. Position 58 is an N6-lipoyllysine (Lys-58).

Belongs to the GcvH family. As to quaternary structure, the glycine cleavage system is composed of four proteins: P, T, L and H. Requires (R)-lipoate as cofactor.

The glycine cleavage system catalyzes the degradation of glycine. The H protein shuttles the methylamine group of glycine from the P protein to the T protein. The sequence is that of Glycine cleavage system H protein from Agrobacterium fabrum (strain C58 / ATCC 33970) (Agrobacterium tumefaciens (strain C58)).